A 211-amino-acid chain; its full sequence is MTKVLFITANPNSAEGSFGMAVGEAFIEAYKNEHPQDEVVTIDLFNTTVPAIDADVFAAWGKFAAGEGFEALTEAQQQKVAAMNTNLETFMHADRYVFVTPMWNFSYPSVVKAYLDNLAIAGKTFKYTENGPVGLLEGKKALHIQATGGVYSEGPYAAVDFGRNHLKTVLGFIGVNETEYIAVEGMNANPEKAQEIKEAAIANARELAKRF.

Residue 102–105 (MWNF) participates in FMN binding.

The protein belongs to the azoreductase type 1 family. Homodimer. The cofactor is FMN.

The catalysed reaction is 2 a quinone + NADH + H(+) = 2 a 1,4-benzosemiquinone + NAD(+). It catalyses the reaction N,N-dimethyl-1,4-phenylenediamine + anthranilate + 2 NAD(+) = 2-(4-dimethylaminophenyl)diazenylbenzoate + 2 NADH + 2 H(+). In terms of biological role, quinone reductase that provides resistance to thiol-specific stress caused by electrophilic quinones. Its function is as follows. Also exhibits azoreductase activity. Catalyzes the reductive cleavage of the azo bond in aromatic azo compounds to the corresponding amines. In Bacillus anthracis, this protein is FMN-dependent NADH:quinone oxidoreductase 3.